Consider the following 64-residue polypeptide: Large ribosomal subunit protein bL35 (64 aa).

The protein belongs to the bacterial ribosomal protein bL35 family.

The polypeptide is Large ribosomal subunit protein bL35 (Pseudomonas putida (strain W619)).